The primary structure comprises 212 residues: MRAATALPSIPSSSSPSPMASDPTELRCSSPESSGDAGAEDPAAVDAAEESGGEGGSGHIAAGTEAAPPRPPEPEPEKVARHGVLPLLGKPYFTCIMCKSHVQPPFQVVVPRSFAPLLPSRTTPATLSWRGRSWGMRFTGGRLIQRLEAGWRGFAVDNDLRLGDGCVFELLVGGGGEQERVEFRVQVLRAEIPARIRGRAGGYTSATPIVID.

Residues 1–78 form a disordered region; sequence MRAATALPSI…PRPPEPEPEK (78 aa). Low complexity-rich tracts occupy residues 8-23 and 36-46; these read PSIP…ASDP and DAGAEDPAAVD. The TF-B3 DNA-binding region spans 93–191; that stretch reads FTCIMCKSHV…EFRVQVLRAE (99 aa).

The protein resides in the nucleus. This is B3 domain-containing protein Os04g0386900 from Oryza sativa subsp. japonica (Rice).